The chain runs to 73 residues: Translation initiation factor IF-1 (73 aa).

The S1-like domain occupies 1 to 73 (MAKKDGVIEI…TRGRIVYRYK (73 aa)).

It belongs to the IF-1 family. In terms of assembly, component of the 30S ribosomal translation pre-initiation complex which assembles on the 30S ribosome in the order IF-2 and IF-3, IF-1 and N-formylmethionyl-tRNA(fMet); mRNA recruitment can occur at any time during PIC assembly.

It is found in the cytoplasm. Functionally, one of the essential components for the initiation of protein synthesis. Stabilizes the binding of IF-2 and IF-3 on the 30S subunit to which N-formylmethionyl-tRNA(fMet) subsequently binds. Helps modulate mRNA selection, yielding the 30S pre-initiation complex (PIC). Upon addition of the 50S ribosomal subunit IF-1, IF-2 and IF-3 are released leaving the mature 70S translation initiation complex. This is Translation initiation factor IF-1 from Arthrobacter sp. (strain FB24).